Consider the following 132-residue polypeptide: Phosphoribosyl-AMP cyclohydrolase (132 aa).

Asp-86 contributes to the Mg(2+) binding site. Cys-87 provides a ligand contact to Zn(2+). 2 residues coordinate Mg(2+): Asp-88 and Asp-90. Zn(2+) is bound by residues Cys-103 and Cys-110.

The protein belongs to the PRA-CH family. In terms of assembly, homodimer. It depends on Mg(2+) as a cofactor. Requires Zn(2+) as cofactor.

The protein resides in the cytoplasm. It catalyses the reaction 1-(5-phospho-beta-D-ribosyl)-5'-AMP + H2O = 1-(5-phospho-beta-D-ribosyl)-5-[(5-phospho-beta-D-ribosylamino)methylideneamino]imidazole-4-carboxamide. It participates in amino-acid biosynthesis; L-histidine biosynthesis; L-histidine from 5-phospho-alpha-D-ribose 1-diphosphate: step 3/9. In terms of biological role, catalyzes the hydrolysis of the adenine ring of phosphoribosyl-AMP. This chain is Phosphoribosyl-AMP cyclohydrolase, found in Clavibacter michiganensis subsp. michiganensis (strain NCPPB 382).